Consider the following 56-residue polypeptide: Large ribosomal subunit protein bL32 (56 aa).

The disordered stretch occupies residues M1–R39. A compositionally biased stretch (basic residues) spans K7–R16. Polar residues predominate over residues S21–A31.

This sequence belongs to the bacterial ribosomal protein bL32 family.

This Shewanella piezotolerans (strain WP3 / JCM 13877) protein is Large ribosomal subunit protein bL32.